A 273-amino-acid chain; its full sequence is Undecaprenyl-diphosphatase (273 aa).

8 consecutive transmembrane segments (helical) span residues 3–23, 47–67, 90–110, 120–140, 148–168, 186–206, 217–237, and 249–269; these read IILW…EFLP, ALDA…WQDI, LLLG…LLKL, IIAT…QWGS, IGIL…LPGA, PTAA…ATLV, LLIP…LAIA, and WVFI…IALG.

This sequence belongs to the UppP family.

It is found in the cell inner membrane. It carries out the reaction di-trans,octa-cis-undecaprenyl diphosphate + H2O = di-trans,octa-cis-undecaprenyl phosphate + phosphate + H(+). Its function is as follows. Catalyzes the dephosphorylation of undecaprenyl diphosphate (UPP). Confers resistance to bacitracin. The chain is Undecaprenyl-diphosphatase from Thermosynechococcus vestitus (strain NIES-2133 / IAM M-273 / BP-1).